Reading from the N-terminus, the 651-residue chain is Probable potassium transport system protein Kup (651 aa).

12 consecutive transmembrane segments (helical) span residues 41–61, 82–102, 130–150, 163–183, 194–214, 235–255, 276–296, 309–329, 366–386, 395–415, 426–446, and 450–470; these read LVLG…IYAF, VVSF…VLFV, LILG…VITP, IVAP…LVTL, VAIV…ASGL, FLTV…LAMT, WLWI…AFIL, MIPS…TVIA, IYIP…VLGF, AYGI…YIVM, ALPI…ANII, and EGGW…WTWV.

This sequence belongs to the HAK/KUP transporter (TC 2.A.72) family.

Its subcellular location is the cell inner membrane. It catalyses the reaction K(+)(in) + H(+)(in) = K(+)(out) + H(+)(out). Functionally, transport of potassium into the cell. Likely operates as a K(+):H(+) symporter. The polypeptide is Probable potassium transport system protein Kup (Brucella ovis (strain ATCC 25840 / 63/290 / NCTC 10512)).